The primary structure comprises 494 residues: Leucine-rich repeat extensin-like protein 4 (494 aa).

An N-terminal signal peptide occupies residues 1–25 (MKNNTTQSLLLLLLFFFFFFEISHS). 3 N-linked (GlcNAc...) asparagine glycosylation sites follow: asparagine 60, asparagine 94, and asparagine 106. 9 LRR repeats span residues 121 to 145 (IRTV…LGLL), 146 to 168 (TDLA…KFKQ), 169 to 193 (LKLL…VLHL), 194 to 217 (PSLK…LFSK), 219 to 240 (LDAI…FGDS), 242 to 263 (VSVI…LVEM), 264 to 287 (KNLN…IGRL), 289 to 311 (NVTV…VGGM), and 312 to 335 (VEVE…ICQL). An N-linked (GlcNAc...) asparagine glycan is attached at asparagine 289. Asparagine 340 is a glycosylation site (N-linked (GlcNAc...) asparagine). A contains the Ser-Pro(4) repeats region spans residues 404-494 (SPPIVALPPP…YASPPPPPFY (91 aa)). The segment covering 422 to 479 (PPVYSPPPSPPVFSPPPSPPVYSPPPPPSIHYSSPPPPPVHHSSPPPPSPEFEGPLPP) has biased composition (pro residues). The tract at residues 422-482 (PPVYSPPPSP…FEGPLPPVIG (61 aa)) is disordered.

In terms of processing, hydroxylated on proline residues in the S-P-P-P-P repeat. O-glycosylated on hydroxyprolines. As to expression, expressed in roots, stems, leaves and flowers, mostly in vascular tissues.

The protein resides in the secreted. Its subcellular location is the cell wall. Modulates cell morphogenesis by regulating cell wall formation and assembly, and/or growth polarization. The protein is Leucine-rich repeat extensin-like protein 4 (LRX4) of Arabidopsis thaliana (Mouse-ear cress).